The chain runs to 313 residues: Minor outer capsid protein P9 (313 aa).

Belongs to the phytoreovirus minor outer capsid protein P9 family.

It is found in the virion. It localises to the host cytoplasm. Functionally, minor outer capsid protein. The polypeptide is Minor outer capsid protein P9 (Catharanthus roseus (Madagascar periwinkle)).